A 143-amino-acid polypeptide reads, in one-letter code: uncharacterized protein (143 aa).

This sequence belongs to the SufE family.

This is an uncharacterized protein from Mycobacterium tuberculosis (strain CDC 1551 / Oshkosh).